We begin with the raw amino-acid sequence, 291 residues long: Phosphoribosylaminoimidazole-succinocarboxamide synthase (291 aa).

Belongs to the SAICAR synthetase family.

The catalysed reaction is 5-amino-1-(5-phospho-D-ribosyl)imidazole-4-carboxylate + L-aspartate + ATP = (2S)-2-[5-amino-1-(5-phospho-beta-D-ribosyl)imidazole-4-carboxamido]succinate + ADP + phosphate + 2 H(+). It functions in the pathway purine metabolism; IMP biosynthesis via de novo pathway; 5-amino-1-(5-phospho-D-ribosyl)imidazole-4-carboxamide from 5-amino-1-(5-phospho-D-ribosyl)imidazole-4-carboxylate: step 1/2. The protein is Phosphoribosylaminoimidazole-succinocarboxamide synthase (ADE1) of Candida albicans (Yeast).